A 201-amino-acid polypeptide reads, in one-letter code: MSTVDLARVGACVLKHAVTGEAVELRNLWQEQACVVAGLRRFGCMVCRWIARDLSNLKGLLDQHGVRLVGVGPEALGLQEFLDGGYFAGELYLDESKQFYKELGFKRYNSLSILPAALGKPVREVAAKAKAVGIQGNLSGDLLQSGGLLVVAKGGDKVLLHFVQKSPGDYAPLESILQALGISAEVGPSELPQCDEEACSR.

Tyrosine 108 carries the post-translational modification Phosphotyrosine.

This sequence belongs to the peroxiredoxin-like PRXL2 family. Prostamide/prostaglandin F synthase subfamily.

Its subcellular location is the cytoplasm. The protein localises to the cytosol. The enzyme catalyses prostaglandin H2 + [thioredoxin]-dithiol = prostaglandin F2alpha + [thioredoxin]-disulfide. The catalysed reaction is prostamide F2alpha + [thioredoxin]-disulfide = prostamide H2 + [thioredoxin]-dithiol. In terms of biological role, catalyzes the reduction of prostaglandin-ethanolamide H(2) (prostamide H(2)) to prostamide F(2alpha) with NADPH as proton donor. Also able to reduce prostaglandin H(2) to prostaglandin F(2alpha). This is Prostamide/prostaglandin F synthase (PRXL2B) from Bos taurus (Bovine).